A 152-amino-acid chain; its full sequence is Methylglyoxal synthase (152 aa).

In terms of domain architecture, MGS-like spans 6-152 (RTMATAKNIA…YQHYLNGRLK (147 aa)). Substrate is bound by residues His-19, Lys-23, 45–48 (TGTT), and 65–66 (SG). Asp-71 functions as the Proton donor/acceptor in the catalytic mechanism. His-98 serves as a coordination point for substrate.

It belongs to the methylglyoxal synthase family.

It catalyses the reaction dihydroxyacetone phosphate = methylglyoxal + phosphate. Functionally, catalyzes the formation of methylglyoxal from dihydroxyacetone phosphate. The sequence is that of Methylglyoxal synthase from Photorhabdus laumondii subsp. laumondii (strain DSM 15139 / CIP 105565 / TT01) (Photorhabdus luminescens subsp. laumondii).